The sequence spans 382 residues: Galactokinase (382 aa).

34 to 37 is a binding site for substrate; sequence EHTD. ATP is bound at residue 124 to 130; the sequence is GAGLSSS. Positions 130 and 162 each coordinate Mg(2+). Asp-174 acts as the Proton acceptor in catalysis. Tyr-223 is a binding site for substrate.

The protein belongs to the GHMP kinase family. GalK subfamily.

The protein localises to the cytoplasm. It catalyses the reaction alpha-D-galactose + ATP = alpha-D-galactose 1-phosphate + ADP + H(+). The protein operates within carbohydrate metabolism; galactose metabolism. Functionally, catalyzes the transfer of the gamma-phosphate of ATP to D-galactose to form alpha-D-galactose-1-phosphate (Gal-1-P). This Shigella dysenteriae serotype 1 (strain Sd197) protein is Galactokinase.